Reading from the N-terminus, the 731-residue chain is Probable G-protein coupled receptor 149 (731 aa).

At 1–35 the chain is on the extracellular side; it reads MSLFLSNLSTNDSSLWKENHNSTDLLNPPGTLNIY. Asn-7, Asn-11, and Asn-21 each carry an N-linked (GlcNAc...) asparagine glycan. A helical transmembrane segment spans residues 36–56; sequence LFCLTCLMTFAALVGSIYSLI. Residues 57 to 69 are Cytoplasmic-facing; sequence SLLKMQNRTVVSM. Residues 70 to 90 traverse the membrane as a helical segment; that stretch reads LVASWSVDDLMSVLSVTIFMF. Over 91-109 the chain is Extracellular; it reads LQWPNEVPGYFQFLCTTSA. Cys-105 and Cys-182 are oxidised to a cystine. A helical membrane pass occupies residues 110-132; sequence LMYLCQGLSSNLKATLLVSYNFY. Residues 133–155 lie on the Cytoplasmic side of the membrane; that stretch reads TMHRGVGSQTASRRSGQVLGVVL. Residues 156–176 form a helical membrane-spanning segment; sequence TVWAASLLLSALPLCGWGAFV. At 177 to 189 the chain is on the extracellular side; it reads RTPWGCLVDCSSS. Residues 190–210 traverse the membrane as a helical segment; it reads YVLFLSIVYALAFGLLVGLSV. Residues 211 to 310 lie on the Cytoplasmic side of the membrane; it reads PLTHRLLCSE…SFTVSVAQKR (100 aa). Residues 234–271 are disordered; the sequence is RGASIPGTPPTAGRVVSLSPEDAPGPSLRRSGGCSPSS. The helical transmembrane segment at 311-331 threads the bilayer; it reads FALILALTKVVLWLPMMMHMV. Topologically, residues 332–342 are extracellular; the sequence is VQNVVGFQSLP. A helical membrane pass occupies residues 343–363; the sequence is LETFSFLLTLLATTVTPVFVL. At 364–731 the chain is on the cytoplasmic side; it reads SKRWTHLPCG…RKREEESKGS (368 aa). The interval 475–526 is disordered; that stretch reads NTDITEAKQDSNNKKDAFSDKTGGDINYEETTFSEGPERRLSHEESQKPDLS. 2 stretches are compositionally biased toward basic and acidic residues: residues 479-497 and 510-526; these read TEAK…DKTG and GPER…PDLS.

The protein belongs to the G-protein coupled receptor 1 family.

Its subcellular location is the cell membrane. Functionally, orphan receptor. This chain is Probable G-protein coupled receptor 149 (GPR149), found in Homo sapiens (Human).